A 120-amino-acid chain; its full sequence is Large ribosomal subunit protein uL14 (120 aa).

The protein belongs to the universal ribosomal protein uL14 family. Part of the 50S ribosomal subunit. Forms a cluster with proteins L3 and L19. In the 70S ribosome, L14 and L19 interact and together make contacts with the 16S rRNA in bridges B5 and B8.

Functionally, binds to 23S rRNA. Forms part of two intersubunit bridges in the 70S ribosome. The sequence is that of Large ribosomal subunit protein uL14 from Phytoplasma australiense.